The sequence spans 180 residues: Cell number regulator 7 (180 aa).

The helical transmembrane segment at 80-102 (AAAGAIYTLLACFTGFQCHWIYS) threads the bilayer.

This sequence belongs to the cornifelin family. As to expression, expressed in roots, leaves, immature ears and silks. Detected preferentially in silks.

It is found in the membrane. The chain is Cell number regulator 7 (CNR7) from Zea mays (Maize).